We begin with the raw amino-acid sequence, 145 residues long: Basic phospholipase A2 Vb-2 (145 aa).

A signal peptide spans 1 to 19 (MNPAHLLVLLAVCVSLLGA). The propeptide occupies 20 to 27 (ANIPPQPL). Intrachain disulfides connect cysteine 38–cysteine 97, cysteine 52–cysteine 144, cysteine 54–cysteine 70, cysteine 69–cysteine 125, cysteine 76–cysteine 118, cysteine 86–cysteine 111, and cysteine 104–cysteine 116. Residues tyrosine 53, glycine 55, and glycine 57 each coordinate Ca(2+). Histidine 73 is an active-site residue. Aspartate 74 provides a ligand contact to Ca(2+). Aspartate 119 is a catalytic residue.

The cofactor is Ca(2+). Expressed by the venom gland.

Its subcellular location is the secreted. It carries out the reaction a 1,2-diacyl-sn-glycero-3-phosphocholine + H2O = a 1-acyl-sn-glycero-3-phosphocholine + a fatty acid + H(+). Functionally, snake venom phospholipase A2 (PLA2) that has only a weak enzymatic activity. Inhibits neuromuscular transmission by blocking acetylcholine release from the nerve termini. PLA2 catalyzes the calcium-dependent hydrolysis of the 2-acyl groups in 3-sn-phosphoglycerides. This chain is Basic phospholipase A2 Vb-2, found in Bungarus fasciatus (Banded krait).